Here is an 89-residue protein sequence, read N- to C-terminus: MDFLARLLGRESPGSKNVAKERLRLVLIHDRADISPQLLQLLKNEIVEVISKYMEIDDKGLEVSLEHVDKQVALVANIPIRKMKRAANI.

The protein belongs to the MinE family.

Its function is as follows. Prevents the cell division inhibition by proteins MinC and MinD at internal division sites while permitting inhibition at polar sites. This ensures cell division at the proper site by restricting the formation of a division septum at the midpoint of the long axis of the cell. In Desulforudis audaxviator (strain MP104C), this protein is Cell division topological specificity factor.